The sequence spans 268 residues: Interleukin-1 beta (268 aa).

The propeptide occupies 1–116 (MAEVPELASE…TRNNDACVHD (116 aa)).

Belongs to the IL-1 family. As to quaternary structure, monomer. In its precursor form, weakly interacts with full-length MEFV; the mature cytokine does not interact at all. Interacts with integrins ITGAV:ITGBV and ITGA5:ITGB1; integrin-binding is required for IL1B signaling. Interacts with cargo receptor TMED10; the interaction is direct and is required for the secretion of IL1B mature form. Interacts with HSP90AB1; the interaction facilitates cargo translocation into the ERGIC. Interacts with HSP90B1; the interaction facilitates cargo translocation into the ERGIC.

The protein resides in the cytoplasm. Its subcellular location is the cytosol. It is found in the secreted. It localises to the lysosome. The protein localises to the extracellular exosome. Potent pro-inflammatory cytokine. Initially discovered as the major endogenous pyrogen, induces prostaglandin synthesis, neutrophil influx and activation, T-cell activation and cytokine production, B-cell activation and antibody production, and fibroblast proliferation and collagen production. Promotes Th17 differentiation of T-cells. Synergizes with IL12/interleukin-12 to induce IFNG synthesis from T-helper 1 (Th1) cells. Plays a role in angiogenesis by inducing VEGF production synergistically with TNF and IL6. Involved in transduction of inflammation downstream of pyroptosis: its mature form is specifically released in the extracellular milieu by passing through the gasdermin-D (GSDMD) pore. The sequence is that of Interleukin-1 beta (IL1B) from Macaca fascicularis (Crab-eating macaque).